The primary structure comprises 188 residues: MSGGRWISNLRQVFGRSRASISSSLLPFPPTSISSGFHVPRLLDAWKNPVAAAAAFRLPQSSGFATMNQLIRHGREEKHRSDRKRALGKCPQKQGVCLRVSTRTPKKPNSALGKIAKVRLSNRNDVFAYIPGEGHNLQEHSMVLVRGGRVKDLPGVKFHCIRGVKDLLGIPDRRRGRSKYGAEKPKST.

A mitochondrion-targeting transit peptide spans 1–63; it reads MSGGRWISNL…AAFRLPQSSG (63 aa).

This sequence belongs to the universal ribosomal protein uS12 family.

The protein resides in the mitochondrion. Protein S12 is involved in the translation initiation step. This is Small ribosomal subunit protein uS12m (RPS12) from Oenothera elata subsp. hookeri (Hooker's evening primrose).